The following is a 247-amino-acid chain: Probable phosphatase Shew_1420 (247 aa).

Residues His-8, His-10, His-16, His-41, Glu-74, His-102, His-132, Asp-193, and His-195 each contribute to the Zn(2+) site.

Belongs to the PHP family. Zn(2+) serves as cofactor.

This Shewanella loihica (strain ATCC BAA-1088 / PV-4) protein is Probable phosphatase Shew_1420.